The chain runs to 307 residues: Transposase InsD for insertion element IS2-9 (307 aa).

The Integrase catalytic domain maps to 112–295 (KPAVPPSKRA…SPREYLRQRA (184 aa)).

Involved in the transposition of the insertion sequence IS2. This chain is Transposase InsD for insertion element IS2-9, found in Escherichia coli (strain K12).